Here is a 70-residue protein sequence, read N- to C-terminus: Translation initiation factor IF-1 (70 aa).

Residues 1–70 enclose the S1-like domain; it reads MKETNLSIKG…LTKGRIIYRH (70 aa).

It belongs to the IF-1 family. In terms of assembly, component of the 30S ribosomal translation pre-initiation complex which assembles on the 30S ribosome in the order IF-2 and IF-3, IF-1 and N-formylmethionyl-tRNA(fMet); mRNA recruitment can occur at any time during PIC assembly.

The protein localises to the cytoplasm. Functionally, one of the essential components for the initiation of protein synthesis. Stabilizes the binding of IF-2 and IF-3 on the 30S subunit to which N-formylmethionyl-tRNA(fMet) subsequently binds. Helps modulate mRNA selection, yielding the 30S pre-initiation complex (PIC). Upon addition of the 50S ribosomal subunit IF-1, IF-2 and IF-3 are released leaving the mature 70S translation initiation complex. The protein is Translation initiation factor IF-1 of Mycoplasmoides gallisepticum (strain R(low / passage 15 / clone 2)) (Mycoplasma gallisepticum).